A 160-amino-acid polypeptide reads, in one-letter code: MQISIFAVGRMKVGAEQELVHRYLDRFSKSAGAVGLHFRKMQEVSESRAQTACQRMEEEGKRLFEALPEPSRLIVCDERGKSVSSIAFAEKLAFYRDEGVRDLVIALGGPDGHSEQVRDRADFLLSFGLMTWPHQIARILLTEQLYRTVTIANNHPYHRF.

Residues glycine 108 and 127-132 (FGLMTW) contribute to the S-adenosyl-L-methionine site.

Belongs to the RNA methyltransferase RlmH family. In terms of assembly, homodimer.

It is found in the cytoplasm. It catalyses the reaction pseudouridine(1915) in 23S rRNA + S-adenosyl-L-methionine = N(3)-methylpseudouridine(1915) in 23S rRNA + S-adenosyl-L-homocysteine + H(+). In terms of biological role, specifically methylates the pseudouridine at position 1915 (m3Psi1915) in 23S rRNA. This Bartonella bacilliformis (strain ATCC 35685 / KC583 / Herrer 020/F12,63) protein is Ribosomal RNA large subunit methyltransferase H.